An 86-amino-acid chain; its full sequence is Elongation factor 1-beta (86 aa).

This sequence belongs to the EF-1-beta/EF-1-delta family.

Functionally, promotes the exchange of GDP for GTP in EF-1-alpha/GDP, thus allowing the regeneration of EF-1-alpha/GTP that could then be used to form the ternary complex EF-1-alpha/GTP/AAtRNA. The chain is Elongation factor 1-beta from Methanocorpusculum labreanum (strain ATCC 43576 / DSM 4855 / Z).